The sequence spans 322 residues: Lymphatic vessel endothelial hyaluronic acid receptor 1 (322 aa).

The first 19 residues, 1–19 (MARCFSLVLLLTSIWTTRL), serve as a signal peptide directing secretion. Topologically, residues 20–238 (LVQGSLRAEE…EAAGFGGVPT (219 aa)) are extracellular. In terms of domain architecture, Link spans 40-130 (GITLVSKKAN…SRQFAAYCYN (91 aa)). N-linked (GlcNAc...) asparagine glycosylation is present at asparagine 53. Cystine bridges form between cysteine 61–cysteine 128 and cysteine 85–cysteine 106. N-linked (GlcNAc...) asparagine glycosylation is present at asparagine 130. The chain crosses the membrane as a helical span at residues 239 to 259 (ALLVLALLFFGAAAGLGFCYV). Topologically, residues 260-322 (KRYVKAFPFT…TTVRCLEAEV (63 aa)) are cytoplasmic. A compositionally biased stretch (basic and acidic residues) spans 279 to 309 (ETKVVKEEKANDSNPNEESKKTDKNPEESKS). The tract at residues 279-322 (ETKVVKEEKANDSNPNEESKKTDKNPEESKSPSKTTVRCLEAEV) is disordered.

In terms of assembly, homodimer; disulfide-linked. Interacts with PDGFB and IGFBP3. Forms a transient ternary complex with PDGFB and PDGFRB in TGN. Post-translationally, O-glycosylated. In terms of tissue distribution, mainly expressed in endothelial cells lining lymphatic vessels.

The protein resides in the cell membrane. Functionally, ligand-specific transporter trafficking between intracellular organelles (TGN) and the plasma membrane. Plays a role in autocrine regulation of cell growth mediated by growth regulators containing cell surface retention sequence binding (CRS). May act as a hyaluronan (HA) transporter, either mediating its uptake for catabolism within lymphatic endothelial cells themselves, or its transport into the lumen of afferent lymphatic vessels for subsequent re-uptake and degradation in lymph nodes. Binds to pericelluar hyaluronan matrices deposited on the surface of leukocytes and facilitates cell adhesion and migration through lymphatic endothelium. This Homo sapiens (Human) protein is Lymphatic vessel endothelial hyaluronic acid receptor 1 (LYVE1).